The sequence spans 449 residues: GTPase Der (449 aa).

2 consecutive EngA-type G domains span residues 4-174 and 183-358; these read PIVA…PPKT and LRIA…VQRQ. GTP contacts are provided by residues 10–17, 57–61, 126–129, 189–196, 236–240, and 301–304; these read GRPNVGKS, DTAGV, NKCD, DTAGI, and NKWD. Residues 359-444 form the KH-like domain; sequence KRVPTSELNN…PIVIVFRSRE (86 aa).

Belongs to the TRAFAC class TrmE-Era-EngA-EngB-Septin-like GTPase superfamily. EngA (Der) GTPase family. In terms of assembly, associates with the 50S ribosomal subunit.

Functionally, GTPase that plays an essential role in the late steps of ribosome biogenesis. The protein is GTPase Der of Chloroflexus aurantiacus (strain ATCC 29366 / DSM 635 / J-10-fl).